Here is a 345-residue protein sequence, read N- to C-terminus: N-acetyl-gamma-glutamyl-phosphate reductase (345 aa).

Residue Cys149 is part of the active site.

This sequence belongs to the NAGSA dehydrogenase family. Type 1 subfamily.

Its subcellular location is the cytoplasm. It catalyses the reaction N-acetyl-L-glutamate 5-semialdehyde + phosphate + NADP(+) = N-acetyl-L-glutamyl 5-phosphate + NADPH + H(+). Its pathway is amino-acid biosynthesis; L-arginine biosynthesis; N(2)-acetyl-L-ornithine from L-glutamate: step 3/4. Functionally, catalyzes the NADPH-dependent reduction of N-acetyl-5-glutamyl phosphate to yield N-acetyl-L-glutamate 5-semialdehyde. This is N-acetyl-gamma-glutamyl-phosphate reductase from Bacillus subtilis (strain 168).